The sequence spans 939 residues: MSNDPSAVSELPDKDSLDNGISNDNERAMGGNGDGGDGLRLPRTTGTLNVNALQKGTNAAHEAGGYKSMDPAKNAETTNDDDNNVVSLDDPIQFTRVSSSSVISGMSSSMSPHSNIDETKSLEAVTPNINTSNITPDHSADNTFSTINASESDHQFNDTLLSKLSLTDSTETIENNATVKHQQPVASSTVNSNKSSTDIRRATPVSTPVISKPSMTTTPRQINSASHSLSNPKHKQHKPKVKPSKPEAKSKPVSVKKSFPSKNPLKNSSPPKKQTEKSYYSSSSKKRKSGSNSGTLRMKDVFTSFVQNIKRNSQDDKRASSSSNNSSSSSITTALRISTPYNAKHIHHVGVDSKTGEYTGLPEEWEKLLTSSGISKREQQQNMQAVMDIVKFYQDVTETNGEDKMFKTFNTTTGLPGSPQVSTPPANSFNKFPPSTSDSHNYGSRTGTPMSNHVMSPTLNTDSSSANGKFIPSRPAPKPPSSASASAPIIKSPVMNSAANVSPLKQTHAPTTPNRTSPNRSSISRNATLKKEEQPLPPIPPTKSKTSPIISTAHTPQQVAQSPKAPAQETVTTPTSKPAQARSLSKELNEKKREERERRKKQLYAKLNEICSDGDPSTKYANLVKIGQGASGGVYTAYEIGTNVSVAIKQMNLEKQPKKELIINEILVMKGSKHPNIVNFIDSYVLKGDLWVIMEYMEGGSLTDVVTHCILTEGQIGAVCRETLSGLEFLHSKGVLHRDIKSDNILLSMEGDIKLTDFGFCAQINELNLKRTTMVGTPYWMAPEVVSRKEYGPKVDIWSLGIMIIEMIEGEPPYLNETPLRALYLIATNGTPKLKEPENLSSSLKKFLDWCLCVEPEDRASATELLHDEYITEIAEANSSLAPLVKLARLKKVAENMDADEDNDDDNDNEHINKTNNCDDNNDSKETVNLDVTEDDKQK.

The disordered stretch occupies residues 1–87; the sequence is MSNDPSAVSE…TNDDDNNVVS (87 aa). S2 is subject to N-acetylserine. A compositionally biased stretch (polar residues) spans 44–57; that stretch reads TTGTLNVNALQKGT. A phosphoserine mark is found at S87 and S165. T167 is subject to Phosphothreonine. A Phosphoserine modification is found at S169. Over residues 176–196 the composition is skewed to polar residues; sequence NATVKHQQPVASSTVNSNKSS. 2 disordered regions span residues 176-299 and 311-331; these read NATV…LRMK and RNSQDDKRASSSSNNSSSSSI. T203 carries the post-translational modification Phosphothreonine. The segment covering 204–231 has biased composition (polar residues); the sequence is PVSTPVISKPSMTTTPRQINSASHSLSN. Positions 232 to 243 are enriched in basic residues; the sequence is PKHKQHKPKVKP. Composition is skewed to low complexity over residues 251–283 and 320–330; these read KPVSVKKSFPSKNPLKNSSPPKKQTEKSYYSSS and SSSSNNSSSSS. A CRIB domain is found at 337 to 350; it reads ISTPYNAKHIHHVG. 2 disordered regions span residues 407–487 and 500–598; these read KTFN…SASA and NVSP…ERER. Polar residues-rich tracts occupy residues 408–467 and 500–527; these read TFNT…SSAN and NVSPLKQTHAPTTPNRTSPNRSSISRNA. The residue at position 418 (S418) is a Phosphoserine. The segment at 434 to 499 is BEM1-binding; it reads PSTSDSHNYG…IKSPVMNSAA (66 aa). Phosphoserine is present on residues S502, S547, and S562. A compositionally biased stretch (low complexity) spans 542-552; it reads TKSKTSPIIST. The segment covering 569 to 578 has biased composition (polar residues); that stretch reads ETVTTPTSKP. Phosphothreonine is present on T573. Over residues 584–597 the composition is skewed to basic and acidic residues; sequence LSKELNEKKREERE. Position 585 is a phosphoserine (S585). One can recognise a Protein kinase domain in the interval 620 to 871; sequence YANLVKIGQG…ATELLHDEYI (252 aa). ATP is bound by residues 626–634 and K649; that span reads IGQGASGGV. D739 serves as the catalytic Proton acceptor. T773 bears the Phosphothreonine mark. Residues 899–908 are compositionally biased toward acidic residues; the sequence is ADEDNDDDND. The segment at 899-939 is disordered; the sequence is ADEDNDDDNDNEHINKTNNCDDNNDSKETVNLDVTEDDKQK. S924 bears the Phosphoserine mark. The residue at position 927 (T927) is a Phosphothreonine.

It belongs to the protein kinase superfamily. STE Ser/Thr protein kinase family. STE20 subfamily. In terms of assembly, interacts with BEM1, CDC42, CLN2, STE4 and the 14-3-3 proteins BMH1 and BMH2. Autophosphorylated and phosphorylated by the CLN2-CDC28 complex in a cell cycle dependent manner. Post-translationally, autophosphorylated on serine residues.

The protein localises to the cytoplasm. The protein resides in the nucleus. The catalysed reaction is L-seryl-[protein] + ATP = O-phospho-L-seryl-[protein] + ADP + H(+). The enzyme catalyses L-threonyl-[protein] + ATP = O-phospho-L-threonyl-[protein] + ADP + H(+). In terms of biological role, MAP4K component of the MAPK pathway required for the mating pheromone response, haploid invasive growth and diploid pseudohyphal development. Links the pheromone response G-protein beta gamma subunits to downstream signaling components. Needed for mating in haploid cells, induction of a mating-specific gene FUS1, induction of mating-specific morphologies, and pheromone-induced proliferation arrest. Required for the regulation of the actin polarization and bud emergence during cell cycle in G1. Involved in the high osmolarity glycerol (HOG) response. Phosphorylates 'Thr-307' and 'Ser-302' or 'Ser-306' of STE11 and 'Ser-357' of MYO3. Phosphorylates histone H2B to form H2BS10ph during meiosis and H(2)O(2)-induced apoptosis. Its interaction with CDC42 is required for both invasive growth and the formation of pseudohyphae. Its interaction with STE4 is required for the pheromone signaling. The sequence is that of Serine/threonine-protein kinase STE20 (STE20) from Saccharomyces cerevisiae (strain ATCC 204508 / S288c) (Baker's yeast).